The sequence spans 833 residues: Mannosyl-oligosaccharide glucosidase (833 aa).

The Cytoplasmic segment spans residues 1-10; the sequence is MLISKSKMFK. The helical; Signal-anchor for type II membrane protein transmembrane segment at 11 to 28 threads the bilayer; it reads TFWILTSIVLLASATVDI. Topologically, residues 29 to 833 are lumenal; that stretch reads SKLQEFEEYQ…ALVVNILGRF (805 aa). Positions 42 and 122 each coordinate substrate. N-linked (GlcNAc...) asparagine glycans are attached at residues Asn42, Asn122, and Asn135. Glu143 is a binding site for substrate. Asp601 acts as the Proton donor in catalysis. A disulfide bond links Cys669 and Cys685. Asn787 is a glycosylation site (N-linked (GlcNAc...) asparagine). Glu804 acts as the Proton acceptor in catalysis.

Belongs to the glycosyl hydrolase 63 family. N-glycosylated.

It is found in the endoplasmic reticulum membrane. The catalysed reaction is N(4)-(alpha-D-Glc-(1-&gt;2)-alpha-D-Glc-(1-&gt;3)-alpha-D-Glc-(1-&gt;3)-alpha-D-Man-(1-&gt;2)-alpha-D-Man-(1-&gt;2)-alpha-D-Man-(1-&gt;3)-[alpha-D-Man-(1-&gt;2)-alpha-D-Man-(1-&gt;3)-[alpha-D-Man-(1-&gt;2)-alpha-D-Man-(1-&gt;6)]-alpha-D-Man-(1-&gt;6)]-beta-D-Man-(1-&gt;4)-beta-D-GlcNAc-(1-&gt;4)-beta-D-GlcNAc)-L-asparaginyl-[protein] + H2O = N(4)-(alpha-D-Glc-(1-&gt;3)-alpha-D-Glc-(1-&gt;3)-alpha-D-Man-(1-&gt;2)-alpha-D-Man-(1-&gt;2)-alpha-D-Man-(1-&gt;3)-[alpha-D-Man-(1-&gt;2)-alpha-D-Man-(1-&gt;3)-[alpha-D-Man-(1-&gt;2)-alpha-D-Man-(1-&gt;6)]-alpha-D-Man-(1-&gt;6)]-beta-D-Man-(1-&gt;4)-beta-D-GlcNAc-(1-&gt;4)-beta-D-GlcNAc)-L-asparaginyl-[protein] + beta-D-glucose. Its pathway is glycan metabolism; N-glycan degradation. Its activity is regulated as follows. Miglitol is an effective inhibitor at 1 mM. In terms of biological role, cleaves the distal alpha 1,2-linked glucose residue from the Glc(3)Man(9)GlcNAc(2) oligosaccharide precursor highly specifically. Seems to play a role in beta-1,6-glucan synthesis. This Saccharomyces cerevisiae (strain ATCC 204508 / S288c) (Baker's yeast) protein is Mannosyl-oligosaccharide glucosidase (CWH41).